The primary structure comprises 210 residues: Large ribosomal subunit protein bL17 (210 aa).

The tract at residues 177–210 (TRSAQRPAFEQDAPESDSAPEAEAKTEEETASAN) is disordered.

This sequence belongs to the bacterial ribosomal protein bL17 family. As to quaternary structure, part of the 50S ribosomal subunit. Contacts protein L32.

This chain is Large ribosomal subunit protein bL17, found in Rhodopirellula baltica (strain DSM 10527 / NCIMB 13988 / SH1).